Reading from the N-terminus, the 305-residue chain is N-acetylmuramic acid 6-phosphate etherase (305 aa).

The segment at 1–24 is disordered; it reads MTTPPSSPLSDPRRTEGVHPTHTD. The span at 11-24 shows a compositional bias: basic and acidic residues; the sequence is DPRRTEGVHPTHTD. One can recognise an SIS domain in the interval 62–225; that stretch reads ALPRLERGGR…SSALMVRLGK (164 aa). Catalysis depends on Glu-90, which acts as the Proton donor. The active site involves Glu-121.

This sequence belongs to the GCKR-like family. MurNAc-6-P etherase subfamily. In terms of assembly, homodimer.

The enzyme catalyses N-acetyl-D-muramate 6-phosphate + H2O = N-acetyl-D-glucosamine 6-phosphate + (R)-lactate. It functions in the pathway amino-sugar metabolism; N-acetylmuramate degradation. In terms of biological role, specifically catalyzes the cleavage of the D-lactyl ether substituent of MurNAc 6-phosphate, producing GlcNAc 6-phosphate and D-lactate. The protein is N-acetylmuramic acid 6-phosphate etherase of Deinococcus geothermalis (strain DSM 11300 / CIP 105573 / AG-3a).